Consider the following 656-residue polypeptide: Translation factor GUF1 homolog, mitochondrial (656 aa).

The region spanning 55–236 (QRIRNFSIIA…EIVRRLPPPD (182 aa)) is the tr-type G domain. Residues 64-71 (AHVDHGKS), 129-133 (DTPGH), and 183-186 (NKID) each bind GTP.

This sequence belongs to the TRAFAC class translation factor GTPase superfamily. Classic translation factor GTPase family. LepA subfamily.

Its subcellular location is the mitochondrion inner membrane. It carries out the reaction GTP + H2O = GDP + phosphate + H(+). Promotes mitochondrial protein synthesis. May act as a fidelity factor of the translation reaction, by catalyzing a one-codon backward translocation of tRNAs on improperly translocated ribosomes. Binds to mitochondrial ribosomes in a GTP-dependent manner. The sequence is that of Translation factor GUF1 homolog, mitochondrial from Aedes aegypti (Yellowfever mosquito).